The chain runs to 282 residues: MSDTPLRIAVTGVTGRMGKEIVTCIVKEEKQFSQEIVLGAAITRLNTNICGMDAGILINTDALGIEITDNLESIKDNFDVLVDFTAPDISIEYLKFCVNNNKNIVIGTTGFNQIHKNIILNASHKIGIVFSSNFSIGVALISKLLHKITQVIGNTSDISIIETHHNRKRDIPSGTSLTMQNIIVNALRSIHSNRIIDSNLDSTTYSPASSYKDILIHSIRAGDVVGEHTVLFAGPGERLEITHKASDRLIFAHGALRAAFWVGRDKIGLFDISDILEMDTLL.

12 to 17 contributes to the NAD(+) binding site; sequence GVTGRM. Arginine 44 is a binding site for NADP(+). Residues 107-109 and 131-134 each bind NAD(+); these read GTT and SSNF. The active-site Proton donor/acceptor is the histidine 164. (S)-2,3,4,5-tetrahydrodipicolinate is bound at residue histidine 165. The Proton donor role is filled by lysine 168. 174-175 lines the (S)-2,3,4,5-tetrahydrodipicolinate pocket; that stretch reads GT.

Belongs to the DapB family. As to quaternary structure, homotetramer.

It is found in the cytoplasm. It catalyses the reaction (S)-2,3,4,5-tetrahydrodipicolinate + NAD(+) + H2O = (2S,4S)-4-hydroxy-2,3,4,5-tetrahydrodipicolinate + NADH + H(+). The enzyme catalyses (S)-2,3,4,5-tetrahydrodipicolinate + NADP(+) + H2O = (2S,4S)-4-hydroxy-2,3,4,5-tetrahydrodipicolinate + NADPH + H(+). The protein operates within amino-acid biosynthesis; L-lysine biosynthesis via DAP pathway; (S)-tetrahydrodipicolinate from L-aspartate: step 4/4. In terms of biological role, catalyzes the conversion of 4-hydroxy-tetrahydrodipicolinate (HTPA) to tetrahydrodipicolinate. This Blochmanniella pennsylvanica (strain BPEN) protein is 4-hydroxy-tetrahydrodipicolinate reductase.